Here is a 134-residue protein sequence, read N- to C-terminus: Small ribosomal subunit protein uS11 (134 aa).

It belongs to the universal ribosomal protein uS11 family. Part of the 30S ribosomal subunit. Interacts with proteins S7 and S18. Binds to IF-3.

Its function is as follows. Located on the platform of the 30S subunit, it bridges several disparate RNA helices of the 16S rRNA. Forms part of the Shine-Dalgarno cleft in the 70S ribosome. The chain is Small ribosomal subunit protein uS11 from Frankia alni (strain DSM 45986 / CECT 9034 / ACN14a).